A 203-amino-acid chain; its full sequence is Urease accessory protein UreG (203 aa).

Gly13–Thr20 serves as a coordination point for GTP.

This sequence belongs to the SIMIBI class G3E GTPase family. UreG subfamily. As to quaternary structure, homodimer. UreD, UreF and UreG form a complex that acts as a GTP-hydrolysis-dependent molecular chaperone, activating the urease apoprotein by helping to assemble the nickel containing metallocenter of UreC. The UreE protein probably delivers the nickel.

The protein localises to the cytoplasm. In terms of biological role, facilitates the functional incorporation of the urease nickel metallocenter. This process requires GTP hydrolysis, probably effectuated by UreG. The sequence is that of Urease accessory protein UreG from Methylobacillus flagellatus (strain ATCC 51484 / DSM 6875 / VKM B-1610 / KT).